A 207-amino-acid polypeptide reads, in one-letter code: Small ribosomal subunit protein uS4 (207 aa).

Residues 32–55 form a disordered region; it reads CKLDSKPGQHGRTSGARTSDYGTQ. The span at 42 to 53 shows a compositional bias: polar residues; that stretch reads GRTSGARTSDYG. The S4 RNA-binding domain occupies 97 to 158; sequence SRLDNVVYRM…TKKKQARILE (62 aa).

This sequence belongs to the universal ribosomal protein uS4 family. Part of the 30S ribosomal subunit. Contacts protein S5. The interaction surface between S4 and S5 is involved in control of translational fidelity.

In terms of biological role, one of the primary rRNA binding proteins, it binds directly to 16S rRNA where it nucleates assembly of the body of the 30S subunit. Its function is as follows. With S5 and S12 plays an important role in translational accuracy. In Paraburkholderia phytofirmans (strain DSM 17436 / LMG 22146 / PsJN) (Burkholderia phytofirmans), this protein is Small ribosomal subunit protein uS4.